Here is a 407-residue protein sequence, read N- to C-terminus: Tyrosine--tRNA ligase (407 aa).

Tyrosine 35 serves as a coordination point for L-tyrosine. The 'HIGH' region motif lies at 40–49 (PTADSLHVGH). Residues tyrosine 168 and glutamine 172 each contribute to the L-tyrosine site. The short motif at 228 to 232 (KMGKT) is the 'KMSKS' region element. Lysine 231 contributes to the ATP binding site. The S4 RNA-binding domain occupies 341-405 (NLLVDLLVKC…RGKKNFNRIV (65 aa)).

The protein belongs to the class-I aminoacyl-tRNA synthetase family. TyrS type 1 subfamily. As to quaternary structure, homodimer.

It is found in the cytoplasm. The catalysed reaction is tRNA(Tyr) + L-tyrosine + ATP = L-tyrosyl-tRNA(Tyr) + AMP + diphosphate + H(+). In terms of biological role, catalyzes the attachment of tyrosine to tRNA(Tyr) in a two-step reaction: tyrosine is first activated by ATP to form Tyr-AMP and then transferred to the acceptor end of tRNA(Tyr). The sequence is that of Tyrosine--tRNA ligase from Clostridium botulinum (strain Kyoto / Type A2).